Consider the following 350-residue polypeptide: Ribosomal RNA large subunit methyltransferase Cfr (350 aa).

Catalysis depends on E92, which acts as the Proton acceptor. Residues 99 to 333 form the Radical SAM core domain; that stretch reads EAGWESFCIS…VTIRSQFGRE (235 aa). A disulfide bond links C106 and C338. Residues C113, C117, and C120 each coordinate [4Fe-4S] cluster. S-adenosyl-L-methionine contacts are provided by residues 159 to 160, S190, 213 to 215, and N293; these read GE and SLH. Residue C338 is the S-methylcysteine intermediate of the active site.

Belongs to the radical SAM superfamily. RlmN family. Cfr subfamily. It depends on [4Fe-4S] cluster as a cofactor.

Its subcellular location is the cytoplasm. It carries out the reaction adenosine(2503) in 23S rRNA + 2 reduced [2Fe-2S]-[ferredoxin] + 2 S-adenosyl-L-methionine = 8-methyladenosine(2503) in 23S rRNA + 5'-deoxyadenosine + L-methionine + 2 oxidized [2Fe-2S]-[ferredoxin] + S-adenosyl-L-homocysteine. In terms of biological role, specifically methylates position 8 of adenine 2503 in 23S rRNA. Confers resistance to some classes of antibiotics. The polypeptide is Ribosomal RNA large subunit methyltransferase Cfr (Shouchella clausii (strain KSM-K16) (Alkalihalobacillus clausii)).